The chain runs to 96 residues: Co-chaperonin GroES (96 aa).

Belongs to the GroES chaperonin family. In terms of assembly, heptamer of 7 subunits arranged in a ring. Interacts with the chaperonin GroEL.

It is found in the cytoplasm. In terms of biological role, together with the chaperonin GroEL, plays an essential role in assisting protein folding. The GroEL-GroES system forms a nano-cage that allows encapsulation of the non-native substrate proteins and provides a physical environment optimized to promote and accelerate protein folding. GroES binds to the apical surface of the GroEL ring, thereby capping the opening of the GroEL channel. The sequence is that of Co-chaperonin GroES from Methylibium petroleiphilum (strain ATCC BAA-1232 / LMG 22953 / PM1).